The primary structure comprises 114 residues: Ribonuclease P protein component (114 aa).

The protein belongs to the RnpA family. As to quaternary structure, consists of a catalytic RNA component (M1 or rnpB) and a protein subunit.

The catalysed reaction is Endonucleolytic cleavage of RNA, removing 5'-extranucleotides from tRNA precursor.. Its function is as follows. RNaseP catalyzes the removal of the 5'-leader sequence from pre-tRNA to produce the mature 5'-terminus. It can also cleave other RNA substrates such as 4.5S RNA. The protein component plays an auxiliary but essential role in vivo by binding to the 5'-leader sequence and broadening the substrate specificity of the ribozyme. The polypeptide is Ribonuclease P protein component (Staphylococcus haemolyticus (strain JCSC1435)).